A 460-amino-acid polypeptide reads, in one-letter code: UDP-N-acetylmuramate--L-alanine ligase (460 aa).

ATP is bound at residue 118–124 (GAHGKTT).

It belongs to the MurCDEF family.

It is found in the cytoplasm. The enzyme catalyses UDP-N-acetyl-alpha-D-muramate + L-alanine + ATP = UDP-N-acetyl-alpha-D-muramoyl-L-alanine + ADP + phosphate + H(+). Its pathway is cell wall biogenesis; peptidoglycan biosynthesis. Functionally, cell wall formation. This is UDP-N-acetylmuramate--L-alanine ligase from Clostridium botulinum (strain Eklund 17B / Type B).